Consider the following 644-residue polypeptide: MEPDDSQLSDILKDARIPDSQDIGVNLTQNLSFDTVQKMIDGVFTPIFSQGTEDSLEKDILKTPGISTIYNGILGNGEETKKRTPKISDAFEPDLNTSGDVFDSDKSEDGLMNDESYLSNTTLSQVVLDSQKYEYLRVRTEEEQQLVIEKRARERFIRKSMKIAEETALSYENDGSRELSETMTQKVTQMDFTETNVPFDGNDESSNLAVRVQSDMNLNEDCEKWMEIDVLKQKVAKSSDMAFAISSEHEKYLWTKMGCLVPIQVKWKLDKRHFNSNLSLRIRFVKYDKKENVEYAIRNPRSDVMKCRSHTEREQHFPFDSFFYIRNSEHEFSYSAEKGSTFTLIMYPGAVQANFDIIFMCQEKCLDLDDRRKTMCLAVFLDDENGNEILHAYIKQVRIVAYPRRDWKNFCEREDAKQKDFRFPELPAYKKASLESINIKQEVNLENMFNVTNTTAQMEPSTSYSSPSNSNNRKRFLNECDSPNNDYTMMHRTPPVTGYASRLHGCVPPIETEHENCQSPSMKRSRCTNYSFRTLTLSTAEYTKVVEFLAREAKVPRYTWVPTQVVSHILPTEGLERFLTAIKAGHDSVLFNANGIYTMGDMIREFEKHNDIFERIGIDSSKLSKYYEAFLSFYRIQEAMKLPK.

The DNA-binding element occupies 223–418 (EKWMEIDVLK…NFCEREDAKQ (196 aa)). The Zn(2+) site is built by C307, H310, C361, and C365. Positions 528-555 (TNYSFRTLTLSTAEYTKVVEFLAREAKV) are required for tertiary structure stability of the protein.

It belongs to the p53 family. As to quaternary structure, homodimer. Interacts (via C-terminus domain) with prmt-5; not methylated by prmt-5. Interacts with cbp-1 (via HAT domain); cep-1 transcriptional activity may be inhibited by interaction with methylated cbp-1. Component of a complex that contains prmt-5 and cbp-1. Interacts with ape-1; the interaction inhibits pro-apoptotic activity of cep-1. Zn(2+) is required as a cofactor. Post-translationally, phosphorylated in response to IR-induced DNA damage which is thought to be mediated by akt-1. Expressed in pharyngeal muscle and neurons.

The protein resides in the nucleus. Functionally, transcriptional activator that binds the same DNA consensus sequence as p53. Has a role in normal development to ensure proper meiotic chromosome segregation. Promotes apoptosis under conditions of cellular and genotoxic stress in response to DNA damage, hypoxia, or starvation. Regulates germline apoptosis in response to DNA damage. Its pro-apoptotic activity is inhibited when bound to ape-1 in vitro. Plays a role in cell cycle arrest in the germline in response to DNA damage by UV-C light. However, not required for survival in response to DNA damage induced by UV-C light, indicating that it is unlikely to be involved in DNA repair. Required for induction of ced-13 in response to DNA damage. Regulates DNA damage-induced apoptosis by inducing transcription of the programmed cell death activator egl-1. Regulates germline proliferation by activating phg-1. Modulates lifespan. The polypeptide is Transcription factor cep-1 (Caenorhabditis elegans).